We begin with the raw amino-acid sequence, 266 residues long: MKLNERSLAFYATCDAPVDNAGFLYKRGGRGTGSHRRWFVLRGNILFYFEAEGSREPLGVILLEGCTVELVDAREEFAFAVRFAGGRSRPYVLAADSQAALEGWVKALSRASFHYLRLVVRELEQQLAAMREGSPANALPANPSPVLTQRPKENGWVVWSTLPEQPSVAPQRPPPLPPRRRASAANGPLASFAQLHARYGLEVQALRDQWRGGQAGLASLEVPWHPGSAETQTQDQPALRGHSGCKVLHVFRSVEWPVCNPGSQGT.

Residues Pro17–Phe113 form the PH domain. Residues Gln165–Ala184 form a disordered region. Ser183 is subject to Phosphoserine. The short motif at Ser191 to Val203 is the F&amp;H element.

It belongs to the sesquipedalian family. Forms homodimers and heterodimers with PHETA2. Interacts with OCRL and INPP5B. Interaction with OCRL may be important for endosomal morphology and function.

Its subcellular location is the early endosome. The protein localises to the recycling endosome. The protein resides in the golgi apparatus. It localises to the trans-Golgi network. It is found in the cytoplasmic vesicle. Its subcellular location is the clathrin-coated vesicle. In terms of biological role, plays a role in endocytic trafficking. Required for receptor recycling from endosomes, both to the trans-Golgi network and the plasma membrane. This chain is Sesquipedalian-1, found in Mus musculus (Mouse).